Reading from the N-terminus, the 470-residue chain is Dendritic cell-specific transmembrane protein (470 aa).

Residues 1 to 33 are Cytoplasmic-facing; it reads MRLWTLGTSIFLRLWGTYVFPRSPSWLDFIQHL. A helical membrane pass occupies residues 34-54; it reads GVCCFVAFLSVSLFSAAFYWI. Leu-55 is a topological domain (extracellular). A helical transmembrane segment spans residues 56-76; the sequence is PPVALLSSVWMITCVFLCCSK. The Cytoplasmic segment spans residues 77-97; the sequence is RARCFILLAVLSCGLREGRNA. Residues 98-118 form a helical membrane-spanning segment; that stretch reads LIAAGTGVVIFGHVENIFYNF. Over 119–209 the chain is Extracellular; it reads RGLLDSMTCN…MVVTTELLTS (91 aa). Residues 210–230 form a helical membrane-spanning segment; sequence VGQKLLALAGLLLILVSTGLF. At 231 to 292 the chain is on the cytoplasmic side; the sequence is LKRFLGPCGW…LQLTPKEKKT (62 aa). Residues 293–313 traverse the membrane as a helical segment; the sequence is LGLFFLPVLTYLYMWVLFAAV. Topologically, residues 314–376 are extracellular; the sequence is DYLLYRLISS…PKPRLSVSET (63 aa). The chain crosses the membrane as a helical span at residues 377 to 397; that stretch reads WVPLSIILLTLIILGLLSSML. Residues 398 to 470 are Cytoplasmic-facing; sequence MQLKILVSVS…QTIPANEDDL (73 aa).

Interacts with CREB3. Monomer. Homodimer. Isoform 1 interacts (via the C-terminus cytoplasmic tail) with OS9 isoform 1 (via the C-terminus tail); the interaction induces DCSTAMP redistribution to the endoplasmic reticulum-Golgi intermediate compartment. Isoform 1 interacts (via the C-terminus cytoplasmic tail) with OS9 isoform 2 (via the C-terminus tail). Post-translationally, glycosylated. In terms of tissue distribution, expressed in macrophages and bone marrow dendritic cells (BM-DC). Weakly expressed in the spleen and lymph node. Highly expressed in multi-nuclear osteoclasts compared to mono-nuclear macrophages. Expressed in foreign body giant cells (FBGCs). Isoform 1 and isoform 2 are expressed in osteoclasts.

Its subcellular location is the cell membrane. It is found in the endoplasmic reticulum membrane. The protein resides in the endoplasmic reticulum-Golgi intermediate compartment membrane. The protein localises to the endosome. Probable cell surface receptor that plays several roles in cellular fusion, cell differentiation, bone and immune homeostasis. Plays a role in TNFSF11-mediated osteoclastogenesis. Cooperates with OCSTAMP in modulating cell-cell fusion in both osteoclasts and foreign body giant cells (FBGCs). Participates in osteoclast bone resorption. Involved in inducing the expression of tartrate-resistant acid phosphatase in osteoclast precursors. Plays a role in haematopoietic stem cell differentiation of bone marrow cells toward the myeloid lineage. Inhibits the development of neutrophilic granulocytes. Plays also a role in the regulation of dendritic cell (DC) antigen presentation activity by controlling phagocytic activity. Involved in the maintenance of immune self-tolerance and avoidance of autoimmune reactions. The protein is Dendritic cell-specific transmembrane protein (Dcstamp) of Mus musculus (Mouse).